Here is a 229-residue protein sequence, read N- to C-terminus: Heptaprenylglyceryl phosphate synthase (229 aa).

K12 contacts sn-glycerol 1-phosphate. Mg(2+) is bound by residues D14 and T40. Residues 159–164 (YIEYSG), G189, and 209–210 (GN) contribute to the sn-glycerol 1-phosphate site.

It belongs to the GGGP/HepGP synthase family. Group I subfamily. Homodimer. It depends on Mg(2+) as a cofactor.

The enzyme catalyses sn-glycerol 1-phosphate + all-trans-heptaprenyl diphosphate = 3-heptaprenyl-sn-glycero-1-phosphate + diphosphate. It participates in membrane lipid metabolism; glycerophospholipid metabolism. Functionally, prenyltransferase that catalyzes in vivo the transfer of the heptaprenyl moiety of heptaprenyl pyrophosphate (HepPP; 35 carbon atoms) to the C3 hydroxyl of sn-glycerol-1-phosphate (G1P), producing heptaprenylglyceryl phosphate (HepGP). This reaction is an ether-bond-formation step in the biosynthesis of archaea-type G1P-based membrane lipids found in Bacillales. The sequence is that of Heptaprenylglyceryl phosphate synthase from Staphylococcus carnosus (strain TM300).